A 527-amino-acid polypeptide reads, in one-letter code: EGF domain-specific O-linked N-acetylglucosamine transferase (527 aa).

The N-terminal stretch at 1–17 (MFMLLVFGALLPEVPLS) is a signal peptide. The Required for optimal activity signature appears at 295–297 (DYD). N354 carries an N-linked (GlcNAc...) asparagine glycan. A Prevents secretion from ER motif is present at residues 524 to 527 (HDEL).

It belongs to the glycosyltransferase 61 family.

The protein localises to the endoplasmic reticulum lumen. The enzyme catalyses L-seryl-[protein] + UDP-N-acetyl-alpha-D-glucosamine = 3-O-(N-acetyl-beta-D-glucosaminyl)-L-seryl-[protein] + UDP + H(+). The catalysed reaction is L-threonyl-[protein] + UDP-N-acetyl-alpha-D-glucosamine = 3-O-(N-acetyl-beta-D-glucosaminyl)-L-threonyl-[protein] + UDP + H(+). In terms of biological role, catalyzes the transfer of a single N-acetylglucosamine from UDP-GlcNAc to a serine or threonine residue in extracellular proteins resulting in their modification with a beta-linked N-acetylglucosamine (O-GlcNAc). Specifically glycosylates the Thr residue located between the fifth and sixth conserved cysteines of folded EGF-like domains. This is EGF domain-specific O-linked N-acetylglucosamine transferase (EOGT) from Bos taurus (Bovine).